The sequence spans 425 residues: Type II secretion system protein L (425 aa).

Residues 1-273 (MKIAGKWKRK…DKAWQNTLLP (273 aa)) lie on the Cytoplasmic side of the membrane. Residues 274 to 290 (WRGVGIAFACYLLLVVA) form a helical membrane-spanning segment. Over 291 to 425 (DAGWAHYQLY…EGRLTLRSQQ (135 aa)) the chain is Periplasmic.

It belongs to the GSP L family. As to quaternary structure, type II secretion system is composed of four main components: the outer membrane complex, the inner membrane complex, the cytoplasmic secretion ATPase and the periplasm-spanning pseudopilus. Forms homodimers. Interacts with OutM/GspM. Interacts with OutE/GspE and OutF/GspF.

It localises to the cell inner membrane. Its function is as follows. Inner membrane component of the type II secretion system required for the energy-dependent secretion of extracellular factors such as proteases and toxins from the periplasm. Plays a role in the complex assembly and recruits OutM resulting in a stable complex in the inner membrane. Provides thus a link between the energy-providing OutE protein in the cytoplasm and the rest of the T2SS machinery. This Pectobacterium carotovorum subsp. carotovorum (Erwinia carotovora subsp. carotovora) protein is Type II secretion system protein L (outL).